Here is a 312-residue protein sequence, read N- to C-terminus: Methionyl-tRNA formyltransferase (312 aa).

Residue 111–114 (SLLP) coordinates (6S)-5,6,7,8-tetrahydrofolate.

It belongs to the Fmt family.

The catalysed reaction is L-methionyl-tRNA(fMet) + (6R)-10-formyltetrahydrofolate = N-formyl-L-methionyl-tRNA(fMet) + (6S)-5,6,7,8-tetrahydrofolate + H(+). Its function is as follows. Attaches a formyl group to the free amino group of methionyl-tRNA(fMet). The formyl group appears to play a dual role in the initiator identity of N-formylmethionyl-tRNA by promoting its recognition by IF2 and preventing the misappropriation of this tRNA by the elongation apparatus. The protein is Methionyl-tRNA formyltransferase of Myxococcus xanthus (strain DK1622).